The chain runs to 614 residues: Elongation factor 4 (614 aa).

A tr-type G domain is found at 10–192 (ALIRNFCIIA…EIVARIPPPV (183 aa)). Residues 22-27 (DHGKST) and 139-142 (NKID) contribute to the GTP site.

The protein belongs to the TRAFAC class translation factor GTPase superfamily. Classic translation factor GTPase family. LepA subfamily.

The protein localises to the cell membrane. The catalysed reaction is GTP + H2O = GDP + phosphate + H(+). In terms of biological role, required for accurate and efficient protein synthesis under certain stress conditions. May act as a fidelity factor of the translation reaction, by catalyzing a one-codon backward translocation of tRNAs on improperly translocated ribosomes. Back-translocation proceeds from a post-translocation (POST) complex to a pre-translocation (PRE) complex, thus giving elongation factor G a second chance to translocate the tRNAs correctly. Binds to ribosomes in a GTP-dependent manner. The protein is Elongation factor 4 of Thermobifida fusca (strain YX).